A 440-amino-acid polypeptide reads, in one-letter code: MAVTVETLDKLERKMTLSLPVTLIQSEVDMRLRRMARTVKMDGFRPGKVPMAVVARRYGDAVQYEVLTNKVGEAFTVAANEANLRVAGRPRITETQGTAEGHVTFDAIFEVFPEVRIADLANVEIEKLSTEVTEASIDKTLQGLRKQRRSFAQRAHDAPAQDGDGVTVDFEGKIDGEPFANGKAENFRFVIGEGPMPKEFEDAVRGMKSGESKTFPLAFPTQYHGQEVAGKTADFLVTVKKIESAHLPEVGEALARSLGSADGSIEGLRADIRKTLEREIRSHLRARNRRAVMNALLANADLELPKASVQDEIARLKANAYADLKQRGVKDPERLEIPEDKVRPTAERNVRLRLIFSEMVRAHGLRAKPEQVRAYVEELAASYEKPAEMVRGYYGDRRRMLEIESSVSEDNVTEFVFARAKVVARTISVDELLNPKDPKD.

The PPIase FKBP-type domain maps to 163 to 248 (GDGVTVDFEG…VKKIESAHLP (86 aa)).

Belongs to the FKBP-type PPIase family. Tig subfamily.

The protein localises to the cytoplasm. It carries out the reaction [protein]-peptidylproline (omega=180) = [protein]-peptidylproline (omega=0). Involved in protein export. Acts as a chaperone by maintaining the newly synthesized protein in an open conformation. Functions as a peptidyl-prolyl cis-trans isomerase. In Verminephrobacter eiseniae (strain EF01-2), this protein is Trigger factor.